The sequence spans 364 residues: Chorismate synthase (364 aa).

Arginine 48 contributes to the NADP(+) binding site. FMN is bound by residues 131–133 (RAS), 243–244 (NA), glycine 288, 303–307 (KPTSS), and arginine 329.

It belongs to the chorismate synthase family. Homotetramer. The cofactor is FMNH2.

It carries out the reaction 5-O-(1-carboxyvinyl)-3-phosphoshikimate = chorismate + phosphate. It participates in metabolic intermediate biosynthesis; chorismate biosynthesis; chorismate from D-erythrose 4-phosphate and phosphoenolpyruvate: step 7/7. Catalyzes the anti-1,4-elimination of the C-3 phosphate and the C-6 proR hydrogen from 5-enolpyruvylshikimate-3-phosphate (EPSP) to yield chorismate, which is the branch point compound that serves as the starting substrate for the three terminal pathways of aromatic amino acid biosynthesis. This reaction introduces a second double bond into the aromatic ring system. This chain is Chorismate synthase, found in Bartonella bacilliformis (strain ATCC 35685 / KC583 / Herrer 020/F12,63).